Here is a 364-residue protein sequence, read N- to C-terminus: Aminomethyltransferase (364 aa).

Belongs to the GcvT family. As to quaternary structure, the glycine cleavage system is composed of four proteins: P, T, L and H.

It carries out the reaction N(6)-[(R)-S(8)-aminomethyldihydrolipoyl]-L-lysyl-[protein] + (6S)-5,6,7,8-tetrahydrofolate = N(6)-[(R)-dihydrolipoyl]-L-lysyl-[protein] + (6R)-5,10-methylene-5,6,7,8-tetrahydrofolate + NH4(+). Functionally, the glycine cleavage system catalyzes the degradation of glycine. The sequence is that of Aminomethyltransferase from Shigella flexneri serotype 5b (strain 8401).